The chain runs to 234 residues: UDP-2,3-diacylglucosamine hydrolase (234 aa).

Mn(2+) is bound by residues Asp9, His11, Asp42, Asn80, and His115. 80 to 81 contributes to the substrate binding site; the sequence is NR. Residues Asp123, Ser161, Lys165, Lys168, and His196 each contribute to the substrate site. The Mn(2+) site is built by His196 and His198.

This sequence belongs to the LpxH family. It depends on Mn(2+) as a cofactor.

The protein resides in the cell inner membrane. The catalysed reaction is UDP-2-N,3-O-bis[(3R)-3-hydroxytetradecanoyl]-alpha-D-glucosamine + H2O = 2-N,3-O-bis[(3R)-3-hydroxytetradecanoyl]-alpha-D-glucosaminyl 1-phosphate + UMP + 2 H(+). It participates in glycolipid biosynthesis; lipid IV(A) biosynthesis; lipid IV(A) from (3R)-3-hydroxytetradecanoyl-[acyl-carrier-protein] and UDP-N-acetyl-alpha-D-glucosamine: step 4/6. Hydrolyzes the pyrophosphate bond of UDP-2,3-diacylglucosamine to yield 2,3-diacylglucosamine 1-phosphate (lipid X) and UMP by catalyzing the attack of water at the alpha-P atom. Involved in the biosynthesis of lipid A, a phosphorylated glycolipid that anchors the lipopolysaccharide to the outer membrane of the cell. The chain is UDP-2,3-diacylglucosamine hydrolase from Histophilus somni (strain 129Pt) (Haemophilus somnus).